The sequence spans 354 residues: Galactoside alpha-(1,2)-fucosyltransferase 2 (354 aa).

Over M1–Q5 the chain is Cytoplasmic. The helical; Signal-anchor for type II membrane protein transmembrane segment at V6–T26 threads the bilayer. Residues H27–H354 lie on the Lumenal side of the membrane. Residues L43–N68 are disordered. Residues M45–S56 show a composition bias toward polar residues. Residues P57–N68 show a composition bias toward basic and acidic residues. N-linked (GlcNAc...) asparagine glycosylation is present at N199.

The protein belongs to the glycosyltransferase 11 family. Specifically expressed in gut.

Its subcellular location is the golgi apparatus. It is found in the golgi stack membrane. It catalyses the reaction a beta-D-galactosyl-(1-&gt;3)-N-acetyl-beta-D-glucosaminyl derivative + GDP-beta-L-fucose = an alpha-L-Fuc-(1-&gt;2)-beta-D-Gal-(1-&gt;3)-beta-D-GlcNAc derivative + GDP + H(+). The catalysed reaction is a beta-D-galactosyl-(1-&gt;4)-N-acetyl-beta-D-glucosaminyl derivative + GDP-beta-L-fucose = an alpha-L-Fuc-(1-&gt;2)-beta-D-Gal-(1-&gt;4)-beta-D-GlcNAc derivative + GDP + H(+). The enzyme catalyses a ganglioside GM1 (d18:1(4E)) + GDP-beta-L-fucose = a ganglioside Fuc-GM1 (d18:1(4E)) + GDP + H(+). It carries out the reaction a globoside GalGb4Cer (d18:1(4E)) + GDP-beta-L-fucose = a globoside Globo-H (d18:1(4E)) + GDP + H(+). It catalyses the reaction a neolactoside nLc4Cer + GDP-beta-L-fucose = a neolactoside IV(2)-alpha-Fuc-nLc4Cer + GDP + H(+). The catalysed reaction is a neolactoside nLc4Cer(d18:1(4E)) + GDP-beta-L-fucose = a neolactoside IV(2)-alpha-Fuc-nLc4Cer(d18:1(4E)) + GDP + H(+). The enzyme catalyses a ganglioside GM1 + GDP-beta-L-fucose = a ganglioside Fuc-GM1 + GDP + H(+). It carries out the reaction a ganglioside GA1 + GDP-beta-L-fucose = a ganglioside Fuc-GA1 + GDP + H(+). It catalyses the reaction Lc4Cer + GDP-beta-L-fucose = alpha-L-fucosyl-(1-&gt;2)-beta-D-galactosyl-(1-&gt;3)-N-acetyl-beta-D-glucosaminyl-(1-&gt;3)-beta-D-galactosyl-(1-&gt;4)-beta-D-glucosyl-(1&lt;-&gt;1')-ceramide + GDP + H(+). The catalysed reaction is a beta-D-Gal-(1-&gt;3)-beta-D-GlcNAc-(1-&gt;3)-beta-D-Gal-(1-&gt;4)-beta-D-Glc-(1&lt;-&gt;1')-Cer(d18:1(4E)) + GDP-beta-L-fucose = alpha-L-fucosyl-(1-&gt;2)- beta-D-galactosyl-(1-&gt;3)-N-acetyl-beta-D-glucosaminyl-(1-&gt;3)-beta-D-galactosyl-(1-&gt;4)-beta-D-glucosyl-(1&lt;-&gt;1')-N-acylsphing-4-enine + GDP + H(+). The enzyme catalyses a ganglioside GD1b + GDP-beta-L-fucose = a ganglioside Fuc-GD1b + GDP + H(+). It carries out the reaction a lactoside III(4)-a-Fuc-Lc4Cer + GDP-beta-L-fucose = a lactoside IV(2),III(4)-a-[Fuc]2-Lc4Cer + GDP + H(+). It catalyses the reaction beta-D-galactosyl-(1-&gt;3)-N-acetyl-D-galactosamine + GDP-beta-L-fucose = alpha-L-fucosyl-(1-&gt;2)-beta-D-galactosyl-(1-&gt;3)-N-acetyl-D-galactosamine + GDP + H(+). It functions in the pathway protein modification; protein glycosylation. Catalyzes the transfer of L-fucose, from a guanosine diphosphate-beta-L-fucose, to the terminal galactose on both O- and N-linked glycans chains of cell surface glycoproteins and glycolipids and the resulting epitope regulates several processes such as cell-cell interaction including host-microbe interaction, cell surface expression and cell proliferation. Preferentially fucosylates gangliosides GA1 and GM1 in the antrum, cecum and colon and in the female reproductive organs. Fucosylated host glycoproteins or glycolipids mediate interaction with intestinal microbiota influencing its composition. Creates a soluble precursor oligosaccharide FuC-alpha ((1,2)Galbeta-) called the H antigen which is an essential substrate for the final step in the soluble ABO blood group antigen synthesis pathway. The protein is Galactoside alpha-(1,2)-fucosyltransferase 2 of Rattus norvegicus (Rat).